The chain runs to 322 residues: Tropinone reductase homolog At2g29260, chloroplastic (322 aa).

The N-terminal 61 residues, 1–61 (MVLDMASHLY…YASQSSIAIT (61 aa)), are a transit peptide targeting the chloroplast. Residue 74–98 (LVTGGTRGIGRAIVEELAGLGAEVH) participates in NADP(+) binding. Ser-207 is a substrate binding site.

This sequence belongs to the short-chain dehydrogenases/reductases (SDR) family. SDR65C subfamily.

The protein localises to the plastid. It localises to the chloroplast. In Arabidopsis thaliana (Mouse-ear cress), this protein is Tropinone reductase homolog At2g29260, chloroplastic.